The following is a 573-amino-acid chain: Proline--tRNA ligase (573 aa).

Belongs to the class-II aminoacyl-tRNA synthetase family. ProS type 1 subfamily. Homodimer.

The protein localises to the cytoplasm. The enzyme catalyses tRNA(Pro) + L-proline + ATP = L-prolyl-tRNA(Pro) + AMP + diphosphate. Catalyzes the attachment of proline to tRNA(Pro) in a two-step reaction: proline is first activated by ATP to form Pro-AMP and then transferred to the acceptor end of tRNA(Pro). As ProRS can inadvertently accommodate and process non-cognate amino acids such as alanine and cysteine, to avoid such errors it has two additional distinct editing activities against alanine. One activity is designated as 'pretransfer' editing and involves the tRNA(Pro)-independent hydrolysis of activated Ala-AMP. The other activity is designated 'posttransfer' editing and involves deacylation of mischarged Ala-tRNA(Pro). The misacylated Cys-tRNA(Pro) is not edited by ProRS. The sequence is that of Proline--tRNA ligase from Moorella thermoacetica (strain ATCC 39073 / JCM 9320).